The chain runs to 410 residues: Multidrug resistance protein MdtM (410 aa).

Residues 1–11 lie on the Cytoplasmic side of the membrane; that stretch reads MPRFFTRHAAT. Residues 12–32 traverse the membrane as a helical segment; the sequence is LFFPMALILYDFAAYLSTDLI. Residues 33–48 lie on the Periplasmic side of the membrane; the sequence is QPGIINVVRDFNADVS. A helical transmembrane segment spans residues 49 to 69; that stretch reads LAPAAVSLYLAGGMALQWLLG. At 70–78 the chain is on the cytoplasmic side; sequence PLSDRIGRR. A helical membrane pass occupies residues 79–99; that stretch reads PVLITGALIFTLACAATMFTT. At 100–103 the chain is on the periplasmic side; the sequence is SMTQ. Residues 104 to 124 form a helical membrane-spanning segment; that stretch reads FLIARAIQGTSICFIATVGYV. At 125–140 the chain is on the cytoplasmic side; sequence TVQEAFGQTKGIKLMA. The helical transmembrane segment at 141–161 threads the bilayer; the sequence is IITSIVLIAPIIGPLSGAALM. The Periplasmic portion of the chain corresponds to 162 to 167; the sequence is HFMHWK. The chain crosses the membrane as a helical span at residues 168–188; that stretch reads VLFAIIAVMGFISFVGLLLAM. The Cytoplasmic segment spans residues 189 to 216; the sequence is PETVKRGAVPFSAKSVLRDFRNVFCNRL. A helical transmembrane segment spans residues 217-237; that stretch reads FLFGAATISLSYIPMMSWVAV. At 238-251 the chain is on the periplasmic side; that stretch reads SPVILIDAGSLTTS. The chain crosses the membrane as a helical span at residues 252–272; that stretch reads QFAWTQVPVFGAVIVANAIVA. Topologically, residues 273 to 282 are cytoplasmic; it reads RFVKDPTEPR. A helical transmembrane segment spans residues 283–303; sequence FIWRAVPIQLVGLSLLIVGNL. The Periplasmic segment spans residues 304-307; the sequence is LSPH. The helical transmembrane segment at 308 to 328 threads the bilayer; the sequence is VWLWSVLGTSLYAFGIGLIFP. The Cytoplasmic portion of the chain corresponds to 329–348; sequence TLFRFTLFSNKLPKGTVSAS. A helical membrane pass occupies residues 349-369; the sequence is LNMVILMVMSVSVEIGRWLWF. Over 370–373 the chain is Periplasmic; the sequence is NGGR. The helical transmembrane segment at 374–394 threads the bilayer; the sequence is LPFHLLAVVAGVIVVFTLAGL. The Cytoplasmic segment spans residues 395–410; that stretch reads LNRVRQHQAAELVEEQ.

It belongs to the major facilitator superfamily. As to quaternary structure, monomer.

It is found in the cell inner membrane. It carries out the reaction Na(+)(in) + 2 H(+)(out) = Na(+)(out) + 2 H(+)(in). It catalyses the reaction K(+)(in) + H(+)(out) = K(+)(out) + H(+)(in). Efflux is inhibited by the ionophore carbonyl cyanide 3-chlorophenylhydrazone (CCCP). Functionally, proton-dependent efflux pump. Confers resistance to a broad spectrum of chemically unrelated substrates. Overexpression confers resistance to acriflavine, chloramphenicol, norfloxacin, ethidium bromide and tetraphenylphosphonium bromide (TPP). Can also export a broad range of quaternary ammonium compounds (QACs) and contribute to the intrinsic resistance of E.coli to these antimicrobial compounds. In addition to its role in multidrug resistance, MdtM likely plays a physiological role in alkaline pH homeostasis and in resistance to bile salts. May function in alkaline pH homeostasis when millimolar concentrations of sodium or potassium are present in the growth medium. When overexpressed, can confer a tolerance to alkaline pH values up to 9.75. Probably acts as a low-affinity antiporter that catalyzes the exchange of internal Na(+) and K(+) cations for extracellular protons to maintain a stable internal pH, acid relative to outside, during exposure to alkaline environments. Can also catalyze Rb(+)/H(+) and Li(+)/H(+) antiport, but not Ca(2+)/H(+) exchange. The exact stoichiometry of antiport is unknown. Finally, it could contribute to bile salt resistance by catalyzing the transport of bile salts out of the cell cytoplasm. Mediates a bile salt/H(+) exchange driven by the electrochemical gradient. Binds to cholate and deoxycholate with micromolar affinity and catalyzes both cholate/H(+) and deoxycholate/H(+) exchange reactions. The protein is Multidrug resistance protein MdtM of Escherichia coli (strain K12).